A 141-amino-acid polypeptide reads, in one-letter code: NADPH-dependent 7-cyano-7-deazaguanine reductase (141 aa).

The active-site Thioimide intermediate is the Cys-56. Asp-63 functions as the Proton donor in the catalytic mechanism. Residues 78 to 80 (VEL) and 97 to 98 (HE) contribute to the substrate site.

The protein belongs to the GTP cyclohydrolase I family. QueF type 1 subfamily.

The protein resides in the cytoplasm. The catalysed reaction is 7-aminomethyl-7-carbaguanine + 2 NADP(+) = 7-cyano-7-deazaguanine + 2 NADPH + 3 H(+). Its pathway is tRNA modification; tRNA-queuosine biosynthesis. In terms of biological role, catalyzes the NADPH-dependent reduction of 7-cyano-7-deazaguanine (preQ0) to 7-aminomethyl-7-deazaguanine (preQ1). The polypeptide is NADPH-dependent 7-cyano-7-deazaguanine reductase (Trichodesmium erythraeum (strain IMS101)).